A 103-amino-acid chain; its full sequence is N(4)-acetylcytidine amidohydrolase (103 aa).

An ASCH domain is found at Ile-6–Lys-101. Lys-21 (proton acceptor) is an active-site residue. Thr-24 functions as the Nucleophile in the catalytic mechanism. The active-site Proton donor is Glu-74.

This sequence belongs to the N(4)-acetylcytidine amidohydrolase family.

The enzyme catalyses N(4)-acetylcytidine + H2O = cytidine + acetate + H(+). The catalysed reaction is N(4)-acetyl-2'-deoxycytidine + H2O = 2'-deoxycytidine + acetate + H(+). It carries out the reaction N(4)-acetylcytosine + H2O = cytosine + acetate + H(+). Catalyzes the hydrolysis of N(4)-acetylcytidine (ac4C). In Escherichia coli O8 (strain IAI1), this protein is N(4)-acetylcytidine amidohydrolase (yqfB).